The chain runs to 275 residues: Lectin (275 aa).

Positions 1–30 (MASLQTQMISFYAIFLSILLTTILFFKVNS) are cleaved as a signal peptide. Mn(2+)-binding residues include Glu-149 and Asp-151. Ca(2+) is bound by residues Asp-151, Phe-153, Asn-155, and Asp-159. 2 residues coordinate Mn(2+): Asp-159 and His-166. N-linked (GlcNAc...) asparagine glycosylation occurs at Asn-217.

This sequence belongs to the leguminous lectin family. In terms of assembly, tetramer of two alpha and two beta chains.

Its function is as follows. D-mannose specific lectin. This is Lectin (LECA) from Pisum sativum (Garden pea).